Consider the following 515-residue polypeptide: Probable cytosol aminopeptidase (515 aa).

Residues Lys-279 and Asp-284 each contribute to the Mn(2+) site. The active site involves Lys-291. Positions 302, 361, and 363 each coordinate Mn(2+). Arg-365 is an active-site residue.

It belongs to the peptidase M17 family. Requires Mn(2+) as cofactor.

Its subcellular location is the cytoplasm. It carries out the reaction Release of an N-terminal amino acid, Xaa-|-Yaa-, in which Xaa is preferably Leu, but may be other amino acids including Pro although not Arg or Lys, and Yaa may be Pro. Amino acid amides and methyl esters are also readily hydrolyzed, but rates on arylamides are exceedingly low.. The enzyme catalyses Release of an N-terminal amino acid, preferentially leucine, but not glutamic or aspartic acids.. In terms of biological role, presumably involved in the processing and regular turnover of intracellular proteins. Catalyzes the removal of unsubstituted N-terminal amino acids from various peptides. The chain is Probable cytosol aminopeptidase from Mycobacterium tuberculosis (strain ATCC 25177 / H37Ra).